The chain runs to 1019 residues: Photoactivated adenylate cyclase subunit alpha-like protein ST- (1019 aa).

The region spanning 55 to 148 is the BLUF 1 domain; the sequence is LRRLMYLSAS…GRMYGEWHMK (94 aa). Positions 204 to 332 constitute a Guanylate cyclase 1 domain; the sequence is VLTFIYLVEF…DCINTASRIT (129 aa). The BLUF 2 domain maps to 467 to 559; sequence LITLTYISQA…RVYGTPLDMT (93 aa). Residues 615-744 form the Guanylate cyclase 2 domain; sequence VMLATDICSF…EVSARVMAVE (130 aa). Disordered stretches follow at residues 801-846, 887-923, and 963-993; these read EDHL…TRPH, QIAA…DQPA, and EGHR…NRAT. Residues 821-834 show a composition bias toward basic residues; that stretch reads RHQRPGPGRPRRGH.

Belongs to the adenylyl cyclase class-4/guanylyl cyclase family. In terms of assembly, heterotetramer of two alpha and two beta subunits.

It localises to the cell projection. Its subcellular location is the cilium. The protein localises to the flagellum. This Euglena gracilis protein is Photoactivated adenylate cyclase subunit alpha-like protein ST-.